The chain runs to 104 residues: Small ribosomal subunit protein uS10 (104 aa).

The protein belongs to the universal ribosomal protein uS10 family. In terms of assembly, part of the 30S ribosomal subunit.

In terms of biological role, involved in the binding of tRNA to the ribosomes. This chain is Small ribosomal subunit protein uS10, found in Xanthomonas oryzae pv. oryzae (strain MAFF 311018).